A 383-amino-acid polypeptide reads, in one-letter code: Chorismate synthase (383 aa).

NADP(+) contacts are provided by R39 and R45. FMN-binding positions include 127–129 (RAS), 249–250 (QS), G294, 309–313 (KPIPT), and R335.

This sequence belongs to the chorismate synthase family. As to quaternary structure, homotetramer. Requires FMNH2 as cofactor.

It catalyses the reaction 5-O-(1-carboxyvinyl)-3-phosphoshikimate = chorismate + phosphate. It functions in the pathway metabolic intermediate biosynthesis; chorismate biosynthesis; chorismate from D-erythrose 4-phosphate and phosphoenolpyruvate: step 7/7. In terms of biological role, catalyzes the anti-1,4-elimination of the C-3 phosphate and the C-6 proR hydrogen from 5-enolpyruvylshikimate-3-phosphate (EPSP) to yield chorismate, which is the branch point compound that serves as the starting substrate for the three terminal pathways of aromatic amino acid biosynthesis. This reaction introduces a second double bond into the aromatic ring system. This chain is Chorismate synthase, found in Caldicellulosiruptor bescii (strain ATCC BAA-1888 / DSM 6725 / KCTC 15123 / Z-1320) (Anaerocellum thermophilum).